The primary structure comprises 332 residues: Holliday junction branch migration complex subunit RuvB (332 aa).

The large ATPase domain (RuvB-L) stretch occupies residues 1–181 (MARILDNNVM…FGITGHMEYY (181 aa)). Residues Leu-20, Arg-21, Gly-62, Lys-65, Thr-66, Thr-67, 128-130 (EDF), Arg-171, Tyr-181, and Arg-218 each bind ATP. Position 66 (Thr-66) interacts with Mg(2+). A small ATPAse domain (RuvB-S) region spans residues 182–252 (QEKDLTEIVE…ITDRALTMLD (71 aa)). Residues 255-332 (REGLNYIDQK…RHLGYPYQNT (78 aa)) are head domain (RuvB-H). Residues Arg-291, Arg-310, Arg-312, and Arg-315 each contribute to the DNA site.

This sequence belongs to the RuvB family. In terms of assembly, homohexamer. Forms an RuvA(8)-RuvB(12)-Holliday junction (HJ) complex. HJ DNA is sandwiched between 2 RuvA tetramers; dsDNA enters through RuvA and exits via RuvB. An RuvB hexamer assembles on each DNA strand where it exits the tetramer. Each RuvB hexamer is contacted by two RuvA subunits (via domain III) on 2 adjacent RuvB subunits; this complex drives branch migration. In the full resolvosome a probable DNA-RuvA(4)-RuvB(12)-RuvC(2) complex forms which resolves the HJ.

It is found in the cytoplasm. The catalysed reaction is ATP + H2O = ADP + phosphate + H(+). Its function is as follows. The RuvA-RuvB-RuvC complex processes Holliday junction (HJ) DNA during genetic recombination and DNA repair, while the RuvA-RuvB complex plays an important role in the rescue of blocked DNA replication forks via replication fork reversal (RFR). RuvA specifically binds to HJ cruciform DNA, conferring on it an open structure. The RuvB hexamer acts as an ATP-dependent pump, pulling dsDNA into and through the RuvAB complex. RuvB forms 2 homohexamers on either side of HJ DNA bound by 1 or 2 RuvA tetramers; 4 subunits per hexamer contact DNA at a time. Coordinated motions by a converter formed by DNA-disengaged RuvB subunits stimulates ATP hydrolysis and nucleotide exchange. Immobilization of the converter enables RuvB to convert the ATP-contained energy into a lever motion, pulling 2 nucleotides of DNA out of the RuvA tetramer per ATP hydrolyzed, thus driving DNA branch migration. The RuvB motors rotate together with the DNA substrate, which together with the progressing nucleotide cycle form the mechanistic basis for DNA recombination by continuous HJ branch migration. Branch migration allows RuvC to scan DNA until it finds its consensus sequence, where it cleaves and resolves cruciform DNA. The polypeptide is Holliday junction branch migration complex subunit RuvB (Streptococcus pyogenes serotype M18 (strain MGAS8232)).